We begin with the raw amino-acid sequence, 173 residues long: 2-C-methyl-D-erythritol 2,4-cyclodiphosphate synthase (173 aa).

Positions 17 and 19 each coordinate a divalent metal cation. 4-CDP-2-C-methyl-D-erythritol 2-phosphate is bound by residues 17–19 and 49–50; these read DVH and HS. Residue H57 coordinates a divalent metal cation. 4-CDP-2-C-methyl-D-erythritol 2-phosphate is bound by residues 76 to 80, 147 to 150, and R157; these read FPNTD and TTTE.

Belongs to the IspF family. Homotrimer. A divalent metal cation is required as a cofactor.

It catalyses the reaction 4-CDP-2-C-methyl-D-erythritol 2-phosphate = 2-C-methyl-D-erythritol 2,4-cyclic diphosphate + CMP. It participates in isoprenoid biosynthesis; isopentenyl diphosphate biosynthesis via DXP pathway; isopentenyl diphosphate from 1-deoxy-D-xylulose 5-phosphate: step 4/6. In terms of biological role, involved in the biosynthesis of isopentenyl diphosphate (IPP) and dimethylallyl diphosphate (DMAPP), two major building blocks of isoprenoid compounds. Catalyzes the conversion of 4-diphosphocytidyl-2-C-methyl-D-erythritol 2-phosphate (CDP-ME2P) to 2-C-methyl-D-erythritol 2,4-cyclodiphosphate (ME-CPP) with a corresponding release of cytidine 5-monophosphate (CMP). The protein is 2-C-methyl-D-erythritol 2,4-cyclodiphosphate synthase of Ehrlichia ruminantium (strain Welgevonden).